The sequence spans 301 residues: Probable alpha-L-glutamate ligase (301 aa).

Positions 104-287 constitute an ATP-grasp domain; that stretch reads TQLLARKGIG…IAGTIYAFLE (184 aa). ATP-binding positions include K141, 178 to 179, D187, and 211 to 213; these read EY and RSN. Residues D248, E260, and N262 each contribute to the Mg(2+) site. Mn(2+)-binding residues include D248, E260, and N262.

Belongs to the RimK family. Requires Mg(2+) as cofactor. It depends on Mn(2+) as a cofactor.

The protein is Probable alpha-L-glutamate ligase of Alkalilimnicola ehrlichii (strain ATCC BAA-1101 / DSM 17681 / MLHE-1).